Reading from the N-terminus, the 296-residue chain is Ribosome biogenesis GTPase A (296 aa).

The region spanning 14–178 (RRQVTEKLKL…LLDTPGILWP (165 aa)) is the CP-type G domain. GTP contacts are provided by residues 58–61 (NKAD), 130–135 (NVGKST), and Gly174.

The protein belongs to the TRAFAC class YlqF/YawG GTPase family. MTG1 subfamily. In terms of assembly, interacts with ctc. Interacts with the immature 50S ribosome subunit. 2 molecules of rbgA bind to one 50S subunit.

It localises to the cytoplasm. Functionally, essential protein that is required for a late step of 50S ribosomal subunit assembly. Has GTPase activity that is stimulated by interaction with the immature 50S ribosome subunit. Binds to the 23S rRNA. Required for the association of ribosomal proteins rplP and rpmA with the large subunit. The polypeptide is Ribosome biogenesis GTPase A (Bacillus cereus (strain ATCC 14579 / DSM 31 / CCUG 7414 / JCM 2152 / NBRC 15305 / NCIMB 9373 / NCTC 2599 / NRRL B-3711)).